A 706-amino-acid polypeptide reads, in one-letter code: Elongation factor G (706 aa).

The region spanning 8–297 is the tr-type G domain; sequence SYVRNIGIGA…AVVDYLPSPN (290 aa). Residues 17–24, 95–99, and 149–152 each bind GTP; these read AHIDAGKT, DTPGH, and NKMD.

This sequence belongs to the TRAFAC class translation factor GTPase superfamily. Classic translation factor GTPase family. EF-G/EF-2 subfamily.

The protein resides in the cytoplasm. In terms of biological role, catalyzes the GTP-dependent ribosomal translocation step during translation elongation. During this step, the ribosome changes from the pre-translocational (PRE) to the post-translocational (POST) state as the newly formed A-site-bound peptidyl-tRNA and P-site-bound deacylated tRNA move to the P and E sites, respectively. Catalyzes the coordinated movement of the two tRNA molecules, the mRNA and conformational changes in the ribosome. This Orientia tsutsugamushi (strain Ikeda) (Rickettsia tsutsugamushi) protein is Elongation factor G.